The sequence spans 243 residues: UDP-2,3-diacylglucosamine hydrolase (243 aa).

Positions 8, 10, 41, 79, and 114 each coordinate Mn(2+). 79–80 (NR) serves as a coordination point for substrate. The substrate site is built by aspartate 122, lysine 164, lysine 167, and histidine 195. The Mn(2+) site is built by histidine 195 and histidine 197.

This sequence belongs to the LpxH family. The cofactor is Mn(2+).

The protein resides in the cell inner membrane. The enzyme catalyses UDP-2-N,3-O-bis[(3R)-3-hydroxytetradecanoyl]-alpha-D-glucosamine + H2O = 2-N,3-O-bis[(3R)-3-hydroxytetradecanoyl]-alpha-D-glucosaminyl 1-phosphate + UMP + 2 H(+). The protein operates within glycolipid biosynthesis; lipid IV(A) biosynthesis; lipid IV(A) from (3R)-3-hydroxytetradecanoyl-[acyl-carrier-protein] and UDP-N-acetyl-alpha-D-glucosamine: step 4/6. Its function is as follows. Hydrolyzes the pyrophosphate bond of UDP-2,3-diacylglucosamine to yield 2,3-diacylglucosamine 1-phosphate (lipid X) and UMP by catalyzing the attack of water at the alpha-P atom. Involved in the biosynthesis of lipid A, a phosphorylated glycolipid that anchors the lipopolysaccharide to the outer membrane of the cell. This is UDP-2,3-diacylglucosamine hydrolase from Vibrio vulnificus (strain YJ016).